The primary structure comprises 466 residues: Asparagine--tRNA ligase (466 aa).

Belongs to the class-II aminoacyl-tRNA synthetase family. Homodimer.

The protein resides in the cytoplasm. The enzyme catalyses tRNA(Asn) + L-asparagine + ATP = L-asparaginyl-tRNA(Asn) + AMP + diphosphate + H(+). The polypeptide is Asparagine--tRNA ligase (Yersinia enterocolitica serotype O:8 / biotype 1B (strain NCTC 13174 / 8081)).